A 183-amino-acid chain; its full sequence is Ribulose bisphosphate carboxylase small subunit, chloroplastic 3 (183 aa).

Residues 1–57 (MASSLMSNAATTMAAATTTAQANMVAPFNGLKSVSAFPVTRKNNDITSVASNGGRVQ) constitute a chloroplast transit peptide.

This sequence belongs to the RuBisCO small chain family. Heterohexadecamer of 8 large and 8 small subunits.

The protein resides in the plastid. It localises to the chloroplast. RuBisCO catalyzes two reactions: the carboxylation of D-ribulose 1,5-bisphosphate, the primary event in carbon dioxide fixation, as well as the oxidative fragmentation of the pentose substrate. Both reactions occur simultaneously and in competition at the same active site. Although the small subunit is not catalytic it is essential for maximal activity. The protein is Ribulose bisphosphate carboxylase small subunit, chloroplastic 3 of Mesembryanthemum crystallinum (Common ice plant).